Here is a 394-residue protein sequence, read N- to C-terminus: Elongation factor Tu (394 aa).

One can recognise a tr-type G domain in the interval 10–204 (KPHINIGTIG…AVDDNIPTPE (195 aa)). Residues 19–26 (GHVDHGKT) are G1. 19-26 (GHVDHGKT) serves as a coordination point for GTP. Mg(2+) is bound at residue T26. The interval 60 to 64 (GITIN) is G2. Residues 81-84 (DCPG) are G3. Residues 81-85 (DCPGH) and 136-139 (NKID) contribute to the GTP site. The G4 stretch occupies residues 136–139 (NKID). Positions 174 to 176 (SAL) are G5.

Belongs to the TRAFAC class translation factor GTPase superfamily. Classic translation factor GTPase family. EF-Tu/EF-1A subfamily. Monomer.

Its subcellular location is the cytoplasm. It carries out the reaction GTP + H2O = GDP + phosphate + H(+). Functionally, GTP hydrolase that promotes the GTP-dependent binding of aminoacyl-tRNA to the A-site of ribosomes during protein biosynthesis. The polypeptide is Elongation factor Tu (Chlamydia trachomatis serovar L2 (strain ATCC VR-902B / DSM 19102 / 434/Bu)).